Consider the following 256-residue polypeptide: Hypodermin-B (256 aa).

Residues 1–22 (MLKFVILVCSVACVFGAVVPGG) form the signal peptide. Residues 23 to 30 (MLPQLDGR) constitute a propeptide, activation peptide. The region spanning 31–254 (IVGGFEADIE…VRSWITENAK (224 aa)) is the Peptidase S1 domain. A disulfide bridge links cysteine 56 with cysteine 72. Active-site charge relay system residues include histidine 71 and aspartate 116. 2 disulfides stabilise this stretch: cysteine 180/cysteine 197 and cysteine 206/cysteine 230. Serine 210 serves as the catalytic Charge relay system.

The protein belongs to the peptidase S1 family.

It localises to the secreted. In terms of biological role, protease that shows preferential cleavage after Arg and Lys residues. The chain is Hypodermin-B from Hypoderma lineatum (Early cattle grub).